The following is a 180-amino-acid chain: Large ribosomal subunit protein uL6 (180 aa).

Belongs to the universal ribosomal protein uL6 family. As to quaternary structure, part of the 50S ribosomal subunit.

In terms of biological role, this protein binds to the 23S rRNA, and is important in its secondary structure. It is located near the subunit interface in the base of the L7/L12 stalk, and near the tRNA binding site of the peptidyltransferase center. The sequence is that of Large ribosomal subunit protein uL6 from Clostridium botulinum (strain 657 / Type Ba4).